A 494-amino-acid chain; its full sequence is DnaJ-related protein rsp1 (494 aa).

The 67-residue stretch at 12–78 folds into the J domain; sequence DYYTILGAES…KLRELFDQRR (67 aa). A compositionally biased stretch (polar residues) spans 229-242; sequence SEISNGLNSNGVEN. The segment at 229-354 is disordered; the sequence is SEISNGLNSN…NDSTSNSTEY (126 aa). Low complexity predominate over residues 243–256; that stretch reads SSITKSSPRSSSSS. Over residues 270 to 287 the composition is skewed to polar residues; it reads IFTSPNTPEHPSVYQTDI. Over residues 321 to 331 the composition is skewed to low complexity; it reads LSRSKSSSLSR. The segment covering 332–354 has biased composition (polar residues); it reads NQTRSQLNDLSAENDSTSNSTEY.

Interacts iwth ssa1.

The protein resides in the cytoplasm. Its subcellular location is the cytoskeleton. The protein localises to the nucleus. Functionally, has a role in the proper organization of the interphase microtubule cytoskeleton. Required for equatorial microtubule organizing center (eMTOC) disassembly into satellites, contributing to the dynamic redistribution of MTOC components for organization of interphase microtubules. This chain is DnaJ-related protein rsp1 (rsp1), found in Schizosaccharomyces pombe (strain 972 / ATCC 24843) (Fission yeast).